The following is a 261-amino-acid chain: Putative glyoxylase CFP32 (261 aa).

VOC domains are found at residues 11 to 129 and 143 to 257; these read TPNW…LWQA and TLIW…VLKP. Glyoxalase regions lie at residues 13-123 and 149-252; these read NWVD…TGAA and LLTD…GAIF.

In Mycobacterium bovis (strain ATCC BAA-935 / AF2122/97), this protein is Putative glyoxylase CFP32.